Reading from the N-terminus, the 83-residue chain is Cytochrome c-554(548) (83 aa).

Heme c is bound by residues cysteine 14, cysteine 17, histidine 18, and methionine 63.

In terms of assembly, homodimer. Binds 1 heme c group covalently per subunit.

The sequence is that of Cytochrome c-554(548) from Halomonas halodenitrificans (strain ATCC 12084 / NCIMB 8669) (Paracoccus halodenitrificans).